The sequence spans 925 residues: Aspulvinone E synthetase melA (925 aa).

The interval 11 to 434 (ETAAARNGDG…GGRAKETIII (424 aa)) is adenylation (A) domain. The Carrier domain maps to 564–644 (SPKNDFEKGL…ELAAALDNLY (81 aa)). Ser-601 is modified (O-(pantetheine 4'-phosphoryl)serine). The thioesterase (TE) domain stretch occupies residues 663-923 (PLWLVHPGAG…KILRSALAER (261 aa)).

This sequence belongs to the NRP synthetase family.

The protein resides in the cytoplasm. The enzyme catalyses 2 3-(4-hydroxyphenyl)pyruvate + AH2 + 2 ATP + O2 = aspulvinone E + A + 2 AMP + CO2 + 2 diphosphate + H2O + H(+). In terms of biological role, nonribosomal peptide synthase; part of the gene cluster that mediates the biosynthesis of Asp-melanin, a pigment that confers resistance against UV light and hampers phagocytosis by soil amoeba. The nonribosomal peptide synthase melA converts 4-hydroxyphenylpyruvate (4-HPPA) to aspulvinone E. The tyrosinase tyrP then performs hydroxylations of both aromatic moieties of aspulvinone E. The product of tyrP is highly unstable, and, due to the high reactivity of methides and ortho-diquinones, the polymeric Asp-melanin forms spontaneously. The protein is Aspulvinone E synthetase melA of Aspergillus terreus (strain NIH 2624 / FGSC A1156).